The primary structure comprises 316 residues: Vacuolar morphogenesis protein 7 (316 aa).

The region spanning 1–124 (MAANSVGKMS…QDFLQLSKPN (124 aa)) is the PX domain. Residues 168–186 (RARTKLHKLRERLEQDVQK) adopt a coiled-coil conformation. The region spanning 250-312 (MQMVRDQEQE…QIANKKARHF (63 aa)) is the t-SNARE coiled-coil homology domain.

As to quaternary structure, possibly multimeric. Associates with VAM3.

The protein localises to the vacuole. In terms of biological role, essential for proper morphogenesis of the vacuole. May exist as structural reinforcement on the surface of the vacuolar membrane and be required for maintenance against rupture by osmotic pressure. The chain is Vacuolar morphogenesis protein 7 (VAM7) from Saccharomyces cerevisiae (strain ATCC 204508 / S288c) (Baker's yeast).